The sequence spans 347 residues: Dihydroorotase (347 aa).

Zn(2+) is bound by residues histidine 17 and histidine 19. Residues 19–21 (HLR) and asparagine 45 each bind substrate. Residues lysine 103, histidine 140, and histidine 178 each contribute to the Zn(2+) site. At lysine 103 the chain carries N6-carboxylysine. Histidine 140 lines the substrate pocket. Leucine 223 contributes to the substrate binding site. Aspartate 251 is a binding site for Zn(2+). The active site involves aspartate 251. Substrate contacts are provided by histidine 255 and alanine 267.

The protein belongs to the metallo-dependent hydrolases superfamily. DHOase family. Class II DHOase subfamily. Homodimer. Zn(2+) is required as a cofactor.

It catalyses the reaction (S)-dihydroorotate + H2O = N-carbamoyl-L-aspartate + H(+). The protein operates within pyrimidine metabolism; UMP biosynthesis via de novo pathway; (S)-dihydroorotate from bicarbonate: step 3/3. Catalyzes the reversible cyclization of carbamoyl aspartate to dihydroorotate. The sequence is that of Dihydroorotase from Citrobacter koseri (strain ATCC BAA-895 / CDC 4225-83 / SGSC4696).